Consider the following 96-residue polypeptide: Muconolactone Delta-isomerase (96 aa).

It belongs to the muconolactone Delta-isomerase family. Homodecamer.

It carries out the reaction (S)-muconolactone = (4,5-dihydro-5-oxofuran-2-yl)-acetate. It participates in aromatic compound metabolism; beta-ketoadipate pathway; 5-oxo-4,5-dihydro-2-furylacetate from catechol: step 3/3. The chain is Muconolactone Delta-isomerase (catC) from Acinetobacter baylyi (strain ATCC 33305 / BD413 / ADP1).